Consider the following 374-residue polypeptide: Methylthioribose-1-phosphate isomerase (374 aa).

The residue at position 2 (serine 2) is an N-acetylserine. Aspartate 253 acts as the Proton donor in catalysis.

It belongs to the eIF-2B alpha/beta/delta subunits family. MtnA subfamily.

It is found in the cytoplasm. Its subcellular location is the nucleus. The enzyme catalyses 5-(methylsulfanyl)-alpha-D-ribose 1-phosphate = 5-(methylsulfanyl)-D-ribulose 1-phosphate. The protein operates within amino-acid biosynthesis; L-methionine biosynthesis via salvage pathway; L-methionine from S-methyl-5-thio-alpha-D-ribose 1-phosphate: step 1/6. In terms of biological role, catalyzes the interconversion of methylthioribose-1-phosphate (MTR-1-P) into methylthioribulose-1-phosphate (MTRu-1-P). The chain is Methylthioribose-1-phosphate isomerase from Arabidopsis thaliana (Mouse-ear cress).